A 97-amino-acid chain; its full sequence is Large ribosomal subunit protein bL27 (97 aa).

Positions 1–10 (MVKLNLSNLQ) are enriched in polar residues. Positions 1-12 (MVKLNLSNLQHF) are excised as a propeptide. The interval 1–38 (MVKLNLSNLQHFAHKKGGGSTSNGRDSQAKRLGAKAAD) is disordered.

It belongs to the bacterial ribosomal protein bL27 family. The N-terminus is cleaved by ribosomal processing cysteine protease Prp.

This chain is Large ribosomal subunit protein bL27, found in Streptococcus equi subsp. zooepidemicus (strain H70).